We begin with the raw amino-acid sequence, 130 residues long: Small ribosomal subunit protein uS8 (130 aa).

This sequence belongs to the universal ribosomal protein uS8 family. As to quaternary structure, part of the 30S ribosomal subunit. Contacts proteins S5 and S12.

One of the primary rRNA binding proteins, it binds directly to 16S rRNA central domain where it helps coordinate assembly of the platform of the 30S subunit. The protein is Small ribosomal subunit protein uS8 of Stutzerimonas stutzeri (strain A1501) (Pseudomonas stutzeri).